Consider the following 96-residue polypeptide: Small ribosomal subunit protein bS6 (96 aa).

The protein belongs to the bacterial ribosomal protein bS6 family.

Binds together with bS18 to 16S ribosomal RNA. The protein is Small ribosomal subunit protein bS6 of Streptomyces griseus subsp. griseus (strain JCM 4626 / CBS 651.72 / NBRC 13350 / KCC S-0626 / ISP 5235).